The sequence spans 217 residues: L-lactate dehydrogenase B chain (217 aa).

Residue asparagine 22 coordinates NAD(+). 2 residues coordinate substrate: asparagine 22 and arginine 53. The active-site Proton acceptor is the histidine 77. At tyrosine 123 the chain carries Phosphotyrosine. Threonine 132 is a substrate binding site. An N6-acetyllysine modification is found at lysine 212.

Belongs to the LDH/MDH superfamily. LDH family. Homotetramer. Interacts with PTEN upstream reading frame protein MP31; the interaction leads to inhibition of mitochondrial lactate dehydrogenase activity, preventing conversion of lactate to pyruvate in mitochondria.

Its subcellular location is the cytoplasm. The protein resides in the mitochondrion inner membrane. The catalysed reaction is (S)-lactate + NAD(+) = pyruvate + NADH + H(+). It participates in fermentation; pyruvate fermentation to lactate; (S)-lactate from pyruvate: step 1/1. Its function is as follows. Interconverts simultaneously and stereospecifically pyruvate and lactate with concomitant interconversion of NADH and NAD(+). This is L-lactate dehydrogenase B chain (LDHB) from Oryctolagus cuniculus (Rabbit).